Reading from the N-terminus, the 240-residue chain is Large ribosomal subunit protein bL25 (240 aa).

2 disordered regions span residues 1 to 21 (MAEN…PARR) and 204 to 240 (GAAP…KAKK). Residues 204 to 229 (GAAPAAGAAAPAGGAAPAAGAAPAKG) are compositionally biased toward low complexity. The segment covering 230–240 (GEAKGGDKAKK) has biased composition (basic and acidic residues).

It belongs to the bacterial ribosomal protein bL25 family. CTC subfamily. Part of the 50S ribosomal subunit; part of the 5S rRNA/L5/L18/L25 subcomplex. Contacts the 5S rRNA. Binds to the 5S rRNA independently of L5 and L18.

Functionally, this is one of the proteins that binds to the 5S RNA in the ribosome where it forms part of the central protuberance. The protein is Large ribosomal subunit protein bL25 of Anaeromyxobacter dehalogenans (strain 2CP-1 / ATCC BAA-258).